Consider the following 331-residue polypeptide: MSPSQTQIEKSQLAAPEPEHCPGPESELAGQGDACKGCANQEICSSQTVKGPDPDLPIITERLSAIDHKILVLSGKGGVGKSTFTSMLAWAIAADEEIEVGAMDLDICGPSLPRMLGAEGESVHQSNSGWSPVYVADNLGLMSISFMLPDPDSAIIWRGAKKNGLIKQFLKDVNWGEKLDYLVVDTPPGTSDEHLSVTTYMKEVGIDGALIVTTPQEVALLDVRKEIDFCRKANIKILGLVENMSGFVCPNCKGESQIFKATTGGGKRLCEELGIPFLGSVPLDPRIGKACDMGECFFDSYPDSPAATAILDVVDALRDQVELSLENLAIK.

Polar residues predominate over residues 1–10; it reads MSPSQTQIEK. A disordered region spans residues 1–32; the sequence is MSPSQTQIEKSQLAAPEPEHCPGPESELAGQG. [4Fe-4S] cluster contacts are provided by C21, C35, C38, and C44. An ATP-binding site is contributed by 75-82; sequence GKGGVGKS. Positions 249 and 252 each coordinate [4Fe-4S] cluster.

The protein belongs to the Mrp/NBP35 ATP-binding proteins family. NUBP1/NBP35 subfamily. In terms of assembly, heterotetramer of 2 NBP35 and 2 CFD1 chains. The cofactor is [4Fe-4S] cluster.

The protein localises to the cytoplasm. It is found in the nucleus. Its function is as follows. Component of the cytosolic iron-sulfur (Fe/S) protein assembly (CIA) machinery. Required for maturation of extramitochondrial Fe-S proteins. The NBP35-CFD1 heterotetramer forms a Fe-S scaffold complex, mediating the de novo assembly of an Fe-S cluster and its transfer to target apoproteins. Required for biogenesis and export of both ribosomal subunits, which may reflect a role in assembly of the Fe/S clusters in RLI1, a protein which performs rRNA processing and ribosome export. The chain is Cytosolic Fe-S cluster assembly factor NBP35 from Candida albicans (strain SC5314 / ATCC MYA-2876) (Yeast).